Here is a 104-residue protein sequence, read N- to C-terminus: Phosphoribosyl-ATP pyrophosphatase (104 aa).

Belongs to the PRA-PH family.

Its subcellular location is the cytoplasm. The catalysed reaction is 1-(5-phospho-beta-D-ribosyl)-ATP + H2O = 1-(5-phospho-beta-D-ribosyl)-5'-AMP + diphosphate + H(+). Its pathway is amino-acid biosynthesis; L-histidine biosynthesis; L-histidine from 5-phospho-alpha-D-ribose 1-diphosphate: step 2/9. This chain is Phosphoribosyl-ATP pyrophosphatase, found in Methanosarcina barkeri (strain Fusaro / DSM 804).